The sequence spans 260 residues: Purine nucleoside phosphorylase XF_0940 (260 aa).

3 residues coordinate Zn(2+): H79, C120, and H137.

The protein belongs to the purine nucleoside phosphorylase YfiH/LACC1 family. Homodimer. It depends on Cu(2+) as a cofactor. The cofactor is Zn(2+).

It carries out the reaction adenosine + phosphate = alpha-D-ribose 1-phosphate + adenine. The catalysed reaction is S-methyl-5'-thioadenosine + phosphate = 5-(methylsulfanyl)-alpha-D-ribose 1-phosphate + adenine. It catalyses the reaction inosine + phosphate = alpha-D-ribose 1-phosphate + hypoxanthine. The enzyme catalyses adenosine + H2O + H(+) = inosine + NH4(+). Its function is as follows. Purine nucleoside enzyme that catalyzes the phosphorolysis of adenosine and inosine nucleosides, yielding D-ribose 1-phosphate and the respective free bases, adenine and hypoxanthine. Also catalyzes the phosphorolysis of S-methyl-5'-thioadenosine into adenine and S-methyl-5-thio-alpha-D-ribose 1-phosphate. Also has adenosine deaminase activity. In Xylella fastidiosa (strain 9a5c), this protein is Purine nucleoside phosphorylase XF_0940.